Consider the following 205-residue polypeptide: MDGDSSTTDASQLGIAGDYIGGSHYVIQPHDDTEDSMNDHEDTNGSKESFREQDIYLPIANVARIMKNAIPQTGKIAKDAKECVQECVSEFISFITSEASERCHQEKRKTINGEDILFAMSTLGFDSYVEPLKLYLQKFREAMKGEKGIGGTVTTGDGLSEELTEEAFTNQLPAGLITTDGQQQNVMVYTTSYQQISGVQQIQFS.

An a domain region spans residues 1–50; that stretch reads MDGDSSTTDASQLGIAGDYIGGSHYVIQPHDDTEDSMNDHEDTNGSKESF. Residues 24-50 form a disordered region; the sequence is HYVIQPHDDTEDSMNDHEDTNGSKESF. The span at 37–50 shows a compositional bias: basic and acidic residues; the sequence is MNDHEDTNGSKESF. The interval 51–140 is b domain; that stretch reads REQDIYLPIA…PLKLYLQKFR (90 aa). The DNA-binding element occupies 57–63; sequence LPIANVA. The subunit association domain (SAD) stretch occupies residues 84–95; the sequence is VQECVSEFISFI. Residues 141–201 are c domain; the sequence is EAMKGEKGIG…SYQQISGVQQ (61 aa).

It belongs to the NFYB/HAP3 subunit family. As to quaternary structure, heterotrimeric transcription factor composed of three components, NF-YA, NF-YB and NF-YC. NF-YB and NF-YC must interact and dimerize for NF-YA association and DNA binding.

The protein localises to the nucleus. Its function is as follows. Component of the sequence-specific heterotrimeric transcription factor (NF-Y) which specifically recognizes a 5'-CCAAT-3' box motif found in the promoters of its target genes. NF-Y can function as both an activator and a repressor, depending on its interacting cofactors. The protein is Nuclear transcription factor Y subunit beta (NFYB) of Gallus gallus (Chicken).